The chain runs to 81 residues: Cytochrome c oxidase subunit 7A1, mitochondrial (81 aa).

The transit peptide at 1–21 (MRHLLGLPQLASRAFSTTVRQ) directs the protein to the mitochondrion. Residues 51-72 (ILYRLTMTLTVVGTGYSLYWLL) form a helical membrane-spanning segment.

The protein belongs to the cytochrome c oxidase VIIa family. In terms of assembly, component of the complex IV (CIV, cytochrome c oxidase). The complex exists as a monomer or a dimer and forms supercomplexes (SCs) in the inner mitochondrial membrane with NADH-ubiquinone oxidoreductase (complex I, CI) and ubiquinol-cytochrome c oxidoreductase (cytochrome b-c1 complex, complex III, CIII), resulting in different assemblies (supercomplex SCI(1)III(2)IV(1) and megacomplex MCI(2)III(2)IV(2)).

The protein localises to the mitochondrion inner membrane. Its pathway is energy metabolism; oxidative phosphorylation. Component of the mitochondrial respiratory complex IV (CIV, also named cytochrome c oxidase complex), the last enzyme in the mitochondrial electron transport chain which drives oxidative phosphorylation. The CIV complex is the component of the respiratory chain that catalyzes the reduction of oxygen to water. Acts as an assembly factor that specifically drives the homodimerization of CIV complexes, mediating the formation of mitochondrial respiratory supercomplexes (respirasomes) containing two CIV: supercomplxes with two molecules of CIV show improved activity. In Danio rerio (Zebrafish), this protein is Cytochrome c oxidase subunit 7A1, mitochondrial.